Reading from the N-terminus, the 419-residue chain is Elongation factor Tu, chloroplastic (419 aa).

The 205-residue stretch at 10–214 folds into the tr-type G domain; the sequence is KPHVNIGTIG…AVDSYIPTPK (205 aa). The G1 stretch occupies residues 19-26; sequence GHVDHGKT. 19 to 26 provides a ligand contact to GTP; it reads GHVDHGKT. T26 contacts Mg(2+). Residues 60-64 are G2; it reads GITIN. The tract at residues 81–84 is G3; the sequence is DCPG. GTP contacts are provided by residues 81–85 and 136–139; these read DCPGH and NKED. The segment at 136–139 is G4; sequence NKED. The G5 stretch occupies residues 174–176; that stretch reads SAL.

This sequence belongs to the TRAFAC class translation factor GTPase superfamily. Classic translation factor GTPase family. EF-Tu/EF-1A subfamily.

The protein localises to the plastid. The protein resides in the chloroplast. The enzyme catalyses GTP + H2O = GDP + phosphate + H(+). Its function is as follows. GTP hydrolase that promotes the GTP-dependent binding of aminoacyl-tRNA to the A-site of ribosomes during protein biosynthesis. The polypeptide is Elongation factor Tu, chloroplastic (tufA) (Chara vulgaris (Common stonewort)).